Consider the following 78-residue polypeptide: Large ribosomal subunit protein bL28 (78 aa).

A disordered region spans residues 1–20; sequence MSRVCQVTSKRPAVGNNRSH.

This sequence belongs to the bacterial ribosomal protein bL28 family.

In Haemophilus ducreyi (strain 35000HP / ATCC 700724), this protein is Large ribosomal subunit protein bL28.